The sequence spans 360 residues: Cyclin-Y-like protein 2 (360 aa).

The Cyclin N-terminal domain occupies 204 to 286; the sequence is RLTAEFAIVS…FLKLINYNIG (83 aa).

The protein belongs to the cyclin family. Cyclin Y subfamily.

The protein is Cyclin-Y-like protein 2 (CCNYL2) of Macaca fascicularis (Crab-eating macaque).